The primary structure comprises 72 residues: Translation initiation factor IF-1 (72 aa).

The S1-like domain maps to 1 to 72; it reads MAKEDNIEMQ…SKGRIVFRSR (72 aa).

The protein belongs to the IF-1 family. Component of the 30S ribosomal translation pre-initiation complex which assembles on the 30S ribosome in the order IF-2 and IF-3, IF-1 and N-formylmethionyl-tRNA(fMet); mRNA recruitment can occur at any time during PIC assembly.

It is found in the cytoplasm. Its function is as follows. One of the essential components for the initiation of protein synthesis. Stabilizes the binding of IF-2 and IF-3 on the 30S subunit to which N-formylmethionyl-tRNA(fMet) subsequently binds. Helps modulate mRNA selection, yielding the 30S pre-initiation complex (PIC). Upon addition of the 50S ribosomal subunit IF-1, IF-2 and IF-3 are released leaving the mature 70S translation initiation complex. This chain is Translation initiation factor IF-1, found in Salmonella paratyphi A (strain ATCC 9150 / SARB42).